Consider the following 248-residue polypeptide: Transmembrane protein 223 (248 aa).

Transmembrane regions (helical) follow at residues isoleucine 46–alanine 68, leucine 84–phenylalanine 104, and tyrosine 140–phenylalanine 160.

This sequence belongs to the TMEM223 family.

The protein resides in the mitochondrion inner membrane. Mitochondrial ribosome-associated protein involved in the first steps of cytochrome c oxidase complex (complex IV) biogenesis. Stimulates the translation of MT-CO1 mRNA and is a constituent of early MT-CO1 assembly intermediates. The protein is Transmembrane protein 223 of Danio rerio (Zebrafish).